The chain runs to 249 residues: Triosephosphate isomerase (249 aa).

9-11 (NWK) contributes to the substrate binding site. The active-site Electrophile is H95. E167 acts as the Proton acceptor in catalysis. Residues G173, S213, and 234–235 (GG) each bind substrate.

Belongs to the triosephosphate isomerase family. Homodimer.

It is found in the cytoplasm. The catalysed reaction is D-glyceraldehyde 3-phosphate = dihydroxyacetone phosphate. It participates in carbohydrate biosynthesis; gluconeogenesis. It functions in the pathway carbohydrate degradation; glycolysis; D-glyceraldehyde 3-phosphate from glycerone phosphate: step 1/1. Its function is as follows. Involved in the gluconeogenesis. Catalyzes stereospecifically the conversion of dihydroxyacetone phosphate (DHAP) to D-glyceraldehyde-3-phosphate (G3P). This is Triosephosphate isomerase from Solibacter usitatus (strain Ellin6076).